A 36-amino-acid polypeptide reads, in one-letter code: Photosystem I reaction center subunit VIII (36 aa).

A helical transmembrane segment spans residues Leu-6–Leu-26.

Belongs to the PsaI family.

It is found in the plastid. It localises to the chloroplast thylakoid membrane. Functionally, may help in the organization of the PsaL subunit. In Drimys granadensis, this protein is Photosystem I reaction center subunit VIII.